The chain runs to 245 residues: Ureidoacrylate amidohydrolase RutB (245 aa).

The active-site Proton acceptor is the D41. K150 is a catalytic residue. C183 (nucleophile) is an active-site residue.

Belongs to the isochorismatase family. RutB subfamily.

It carries out the reaction (Z)-3-ureidoacrylate + H2O + H(+) = (Z)-3-aminoacrylate + NH4(+) + CO2. The catalysed reaction is (Z)-3-ureidoacrylate + H2O = (Z)-3-aminoacrylate + carbamate + H(+). It catalyses the reaction (Z)-2-methylureidoacrylate + H2O + H(+) = (Z)-2-methylaminoacrylate + NH4(+) + CO2. Its function is as follows. Hydrolyzes ureidoacrylate to form aminoacrylate and carbamate. The carbamate hydrolyzes spontaneously, thereby releasing one of the nitrogen atoms of the pyrimidine ring as ammonia and one of its carbon atoms as CO2. This Pseudomonas savastanoi pv. phaseolicola (strain 1448A / Race 6) (Pseudomonas syringae pv. phaseolicola (strain 1448A / Race 6)) protein is Ureidoacrylate amidohydrolase RutB.